The following is a 272-amino-acid chain: Putative phosphoenolpyruvate synthase regulatory protein (272 aa).

ADP is bound at residue 152–159 (GVSRCGKT).

Belongs to the pyruvate, phosphate/water dikinase regulatory protein family. PSRP subfamily.

It catalyses the reaction [pyruvate, water dikinase] + ADP = [pyruvate, water dikinase]-phosphate + AMP + H(+). The catalysed reaction is [pyruvate, water dikinase]-phosphate + phosphate + H(+) = [pyruvate, water dikinase] + diphosphate. In terms of biological role, bifunctional serine/threonine kinase and phosphorylase involved in the regulation of the phosphoenolpyruvate synthase (PEPS) by catalyzing its phosphorylation/dephosphorylation. In Pseudomonas fluorescens (strain ATCC BAA-477 / NRRL B-23932 / Pf-5), this protein is Putative phosphoenolpyruvate synthase regulatory protein.